A 100-amino-acid chain; its full sequence is Urease subunit gamma (100 aa).

It belongs to the urease gamma subunit family. As to quaternary structure, heterotrimer of UreA (gamma), UreB (beta) and UreC (alpha) subunits. Three heterotrimers associate to form the active enzyme.

The protein localises to the cytoplasm. The enzyme catalyses urea + 2 H2O + H(+) = hydrogencarbonate + 2 NH4(+). It functions in the pathway nitrogen metabolism; urea degradation; CO(2) and NH(3) from urea (urease route): step 1/1. This Burkholderia cenocepacia (strain ATCC BAA-245 / DSM 16553 / LMG 16656 / NCTC 13227 / J2315 / CF5610) (Burkholderia cepacia (strain J2315)) protein is Urease subunit gamma.